We begin with the raw amino-acid sequence, 182 residues long: Heat shock protein beta-2 (182 aa).

One can recognise a sHSP domain in the interval 55 to 163 (RAGEGARAGA…DTEVNEVYIS (109 aa)).

It belongs to the small heat shock protein (HSP20) family. As to quaternary structure, interacts with DMPK; may enhance its kinase activity.

It is found in the cytoplasm. It localises to the nucleus. Its function is as follows. May regulate the kinase DMPK. This Mus musculus (Mouse) protein is Heat shock protein beta-2 (Hspb2).